Consider the following 317-residue polypeptide: Ribonuclease Z (317 aa).

Residues H61, H63, D65, H66, H139, D210, and H268 each contribute to the Zn(2+) site. D65 acts as the Proton acceptor in catalysis.

It belongs to the RNase Z family. Homodimer. The cofactor is Zn(2+).

It carries out the reaction Endonucleolytic cleavage of RNA, removing extra 3' nucleotides from tRNA precursor, generating 3' termini of tRNAs. A 3'-hydroxy group is left at the tRNA terminus and a 5'-phosphoryl group is left at the trailer molecule.. With respect to regulation, inhibited by high salt concentrations. Its function is as follows. Zinc phosphodiesterase, which displays some tRNA 3'-processing endonuclease activity. Probably involved in tRNA maturation, by removing a 3'-trailer from precursor tRNA. Can also catalyze the 5' end cleavage of the 5S rRNA. This is Ribonuclease Z from Haloferax volcanii (strain ATCC 29605 / DSM 3757 / JCM 8879 / NBRC 14742 / NCIMB 2012 / VKM B-1768 / DS2) (Halobacterium volcanii).